The sequence spans 348 residues: MSDRLTLLRPDDWHIHLRDGAVLPNTVADVARTFGRAIIMPNLVPPVRNAAEADAYRQRILAARPAGSRFEPLMVLYLTDRTQPEEIRAAKACGFVHAAKLYPAGATTNSDSGVTSIDKIFPVLEAMAEVGLPLLIHGEVTRGDVDVFDREKIFIDEHMRRVVERFPSLKVVFEHITTAEAVQFVKEASANVGATITAHHLLYNRNHMLVGGIRPHFYCLPILKRNTHQEALLDAATSGNAKFFLGTDSAPHAQHAKEAACGCAGCYSAYAAIELYAEAFEQRNALDQLEAFASLNGPRFYGLPANTDSITLVREEWTAPASLPFGELTVIPLRAGEKLRWRLLEDHS.

Zn(2+) is bound by residues H14 and H16. Substrate-binding positions include 16–18 and N42; that span reads HLR. K100, H137, and H175 together coordinate Zn(2+). K100 is modified (N6-carboxylysine). H137 contributes to the substrate binding site. L220 is a substrate binding site. Residue D248 participates in Zn(2+) binding. Residue D248 is part of the active site. The substrate site is built by H252 and A264.

This sequence belongs to the metallo-dependent hydrolases superfamily. DHOase family. Class II DHOase subfamily. As to quaternary structure, homodimer. It depends on Zn(2+) as a cofactor.

The catalysed reaction is (S)-dihydroorotate + H2O = N-carbamoyl-L-aspartate + H(+). It participates in pyrimidine metabolism; UMP biosynthesis via de novo pathway; (S)-dihydroorotate from bicarbonate: step 3/3. Catalyzes the reversible cyclization of carbamoyl aspartate to dihydroorotate. The protein is Dihydroorotase of Pseudomonas fluorescens (strain ATCC BAA-477 / NRRL B-23932 / Pf-5).